Reading from the N-terminus, the 574-residue chain is Proline--tRNA ligase (574 aa).

The protein belongs to the class-II aminoacyl-tRNA synthetase family. ProS type 1 subfamily. As to quaternary structure, homodimer.

The protein resides in the cytoplasm. The catalysed reaction is tRNA(Pro) + L-proline + ATP = L-prolyl-tRNA(Pro) + AMP + diphosphate. Its function is as follows. Catalyzes the attachment of proline to tRNA(Pro) in a two-step reaction: proline is first activated by ATP to form Pro-AMP and then transferred to the acceptor end of tRNA(Pro). As ProRS can inadvertently accommodate and process non-cognate amino acids such as alanine and cysteine, to avoid such errors it has two additional distinct editing activities against alanine. One activity is designated as 'pretransfer' editing and involves the tRNA(Pro)-independent hydrolysis of activated Ala-AMP. The other activity is designated 'posttransfer' editing and involves deacylation of mischarged Ala-tRNA(Pro). The misacylated Cys-tRNA(Pro) is not edited by ProRS. The chain is Proline--tRNA ligase from Oleidesulfovibrio alaskensis (strain ATCC BAA-1058 / DSM 17464 / G20) (Desulfovibrio alaskensis).